We begin with the raw amino-acid sequence, 297 residues long: ABSCISIC ACID-INSENSITIVE 5-like protein 2 (297 aa).

A phosphoserine mark is found at Ser21, Ser43, and Ser81. Disordered stretches follow at residues 100–119 (IQQNKNGGSAHERRDKQPTL) and 138–157 (IPGSNHDGPVGGGSAGSGAG). At Thr118 the chain carries Phosphothreonine. Positions 146–157 (PVGGGSAGSGAG) are enriched in gly residues. Positions 225–288 (VERRQKRMIK…SVPPPDPKRQ (64 aa)) constitute a bZIP domain. The tract at residues 227 to 246 (RRQKRMIKNRESAARSRARK) is basic motif. Residues 253–267 (LEIKVSRLEEENERL) are leucine-zipper. Residues 272–297 (EVEKILPSVPPPDPKRQLRRTSSAPF) are disordered.

Belongs to the bZIP family. ABI5 subfamily. In terms of assembly, DNA-binding heterodimer with ABI5/DPBF1, DPBF2 or EEL/DPBF4. Interacts with the AFP proteins AFP1, AFP2, AFP3 and AFP4. As to expression, predominantly expressed in seeds.

It is found in the nucleus. Functionally, binds to the embryo specification element and the ABA-responsive element (ABRE) of the Dc3 gene promoter. Could participate in abscisic acid-regulated gene expression during seed development. The sequence is that of ABSCISIC ACID-INSENSITIVE 5-like protein 2 (DPBF3) from Arabidopsis thaliana (Mouse-ear cress).